The primary structure comprises 296 residues: Nitrogenase iron protein (296 aa).

12-19 lines the ATP pocket; it reads GKGGIGKS. C100 provides a ligand contact to [4Fe-4S] cluster. R103 carries the ADP-ribosylarginine; by dinitrogenase reductase ADP-ribosyltransferase modification. Residue C134 participates in [4Fe-4S] cluster binding.

The protein belongs to the NifH/BchL/ChlL family. In terms of assembly, homodimer. Requires [4Fe-4S] cluster as cofactor. Post-translationally, the reversible ADP-ribosylation of Arg-103 inactivates the nitrogenase reductase and regulates nitrogenase activity.

It carries out the reaction N2 + 8 reduced [2Fe-2S]-[ferredoxin] + 16 ATP + 16 H2O = H2 + 8 oxidized [2Fe-2S]-[ferredoxin] + 2 NH4(+) + 16 ADP + 16 phosphate + 6 H(+). Its function is as follows. The key enzymatic reactions in nitrogen fixation are catalyzed by the nitrogenase complex, which has 2 components: the iron protein and the molybdenum-iron protein. The protein is Nitrogenase iron protein of Acidithiobacillus ferrooxidans (strain ATCC 23270 / DSM 14882 / CIP 104768 / NCIMB 8455) (Ferrobacillus ferrooxidans (strain ATCC 23270)).